A 575-amino-acid chain; its full sequence is Transcription factor COE2 (575 aa).

Positions 62–65 are interaction with DNA; it reads RKSN. A C5-type zinc finger spans residues 150–169; it reads CRVLLTHEVMCSRCCEKKSC. Interaction with DNA regions lie at residues 196–203 and 235–238; these read NCLKTAGN and NNSK. The IPT/TIG domain occupies 253 to 336; the sequence is PCIKAISPSE…KGAPGRFIYT (84 aa). Residues 441-453 show a composition bias toward polar residues; sequence STQGNNQGYIRNT. The segment at 441–479 is disordered; it reads STQGNNQGYIRNTSSISPRGYSSSSTPQQSNYSTSSNSM. Residues 454–479 show a composition bias toward low complexity; that stretch reads SSISPRGYSSSSTPQQSNYSTSSNSM.

Belongs to the COE family. As to quaternary structure, forms either a homodimer or a heterodimer with a related family member. Interacts with SIX1.

It localises to the nucleus. Its function is as follows. Transcription factor that, in osteoblasts, activates the decoy receptor for RANKL, TNFRSF11B, which in turn regulates osteoclast differentiation. Acts in synergy with the Wnt-responsive LEF1/CTNNB1 pathway. Recognizes variations of the palindromic sequence 5'-ATTCCCNNGGGAATT-3'. This chain is Transcription factor COE2 (EBF2), found in Homo sapiens (Human).